Here is a 357-residue protein sequence, read N- to C-terminus: MIEREKLDKVKHRFQEVESLMADPEVANDPDRMRELGQEHSRLEEVVEAIDRYERLLDERDELEGMIRDESGEMEALAKEELEQLETKLPAVEEDLKQKLIPKDPEEEKNAIVEIRAGAGGDEASLFAGDLFRLYTQYAKQQGWTYELIDASPGTQGGFREVIFAVKGEDVYGTLKYEAGVHRVQRVPETESSGRIHTSAATVAVLPEAEEVDVDINPSDLTIETFKATGPGGQSVNTTDSAVRIKHAPSGVEVSCQDEKSQHKNRSKAMRVLRSRVYEKKREEQQAEREEARRSMVGSGDRSAKIRTYNFPQDRVTDHRLEGGQKNHSLQPIMDGEIDPIIDALRAEEHAEKLANL.

Q234 is subject to N5-methylglutamine. Residues 249–308 (PSGVEVSCQDEKSQHKNRSKAMRVLRSRVYEKKREEQQAEREEARRSMVGSGDRSAKIRT) are disordered. The span at 263–274 (HKNRSKAMRVLR) shows a compositional bias: basic residues. Residues 276 to 294 (RVYEKKREEQQAEREEARR) show a composition bias toward basic and acidic residues.

Belongs to the prokaryotic/mitochondrial release factor family. Post-translationally, methylated by PrmC. Methylation increases the termination efficiency of RF1.

It is found in the cytoplasm. Its function is as follows. Peptide chain release factor 1 directs the termination of translation in response to the peptide chain termination codons UAG and UAA. This chain is Peptide chain release factor 1, found in Salinibacter ruber (strain DSM 13855 / M31).